We begin with the raw amino-acid sequence, 392 residues long: Stilbene synthase 2 (392 aa).

55–58 (KFNR) contributes to the substrate binding site. The active site involves Cys-164. Substrate-binding positions include Leu-267 and 305-307 (GGP).

Belongs to the thiolase-like superfamily. Chalcone/stilbene synthases family. Homodimer.

It is found in the cytoplasm. The catalysed reaction is 4-coumaroyl-CoA + 3 malonyl-CoA + 3 H(+) = trans-resveratrol + 4 CO2 + 4 CoA. The protein operates within phytoalexin biosynthesis; 3,4',5-trihydroxystilbene biosynthesis; 3,4',5-trihydroxystilbene from trans-4-coumarate: step 2/2. Its function is as follows. Mediates resistance to pathogens which are sensitive to stilbenes. In Vitis vinifera (Grape), this protein is Stilbene synthase 2.